We begin with the raw amino-acid sequence, 109 residues long: uncharacterized protein (109 aa).

This is an uncharacterized protein from Escherichia coli (strain K12).